The following is a 162-amino-acid chain: Probable chemoreceptor glutamine deamidase CheD (162 aa).

It belongs to the CheD family.

It catalyses the reaction L-glutaminyl-[protein] + H2O = L-glutamyl-[protein] + NH4(+). In terms of biological role, probably deamidates glutamine residues to glutamate on methyl-accepting chemotaxis receptors (MCPs), playing an important role in chemotaxis. The polypeptide is Probable chemoreceptor glutamine deamidase CheD (Pyrococcus horikoshii (strain ATCC 700860 / DSM 12428 / JCM 9974 / NBRC 100139 / OT-3)).